We begin with the raw amino-acid sequence, 249 residues long: MAQAVEEWYRQMPIITRSYLTAAVVTTVGCTLEIISPYHLYLNPKLVVQHYEIWRLVTNFLYFRKMDLDFLFHMFFLARYCKLLEENSFRGRTADFFYMLLFGATVLTGIVLIGGMIPYISETFARILFLSNSLTFMMVYVWSKHNPFIHMSFLGLFTFTAAYLPWVLLGFSILVGSSTWVDLLGMIAGHVYYFLEDVYPRMTGRRPLKTPSFIKALFADDNVVVAQPPNAGIGAGARFGAIGVDPQAQ.

Residues 1-21 (MAQAVEEWYRQMPIITRSYLT) lie on the Cytoplasmic side of the membrane. A helical membrane pass occupies residues 22–42 (AAVVTTVGCTLEIISPYHLYL). Topologically, residues 43–96 (NPKLVVQHYEIWRLVTNFLYFRKMDLDFLFHMFFLARYCKLLEENSFRGRTADF) are lumenal. A helical membrane pass occupies residues 97-117 (FYMLLFGATVLTGIVLIGGMI). Residues 118 to 122 (PYISE) are Cytoplasmic-facing. Residues 123–143 (TFARILFLSNSLTFMMVYVWS) traverse the membrane as a helical segment. Topologically, residues 144–152 (KHNPFIHMS) are lumenal. Residues 153 to 173 (FLGLFTFTAAYLPWVLLGFSI) traverse the membrane as a helical segment. The Cytoplasmic segment spans residues 174-249 (LVGSSTWVDL…GAIGVDPQAQ (76 aa)).

Belongs to the derlin family. Expressed in roots, stalks, leaves, immature ears, embryo and endosperm.

Its subcellular location is the endoplasmic reticulum membrane. May be involved in the degradation process of specific misfolded endoplasmic reticulum (ER) luminal proteins. This Zea mays (Maize) protein is Derlin-2.2 (DER2.2).